A 1154-amino-acid polypeptide reads, in one-letter code: DNA-directed RNA polymerase, mitochondrial (1154 aa).

The transit peptide at 1–30 (MLRRKIQTYLSRSHIRRGLCGLRFFQTQRL) directs the protein to the mitochondrion. Residues 221–243 (ESENGKDQNGDSSLKEKQPDVET) are disordered. Residues 223-240 (ENGKDQNGDSSLKEKQPD) show a composition bias toward basic and acidic residues. Active-site residues include Asp-821, Lys-890, and Asp-1061.

The protein belongs to the phage and mitochondrial RNA polymerase family.

The protein resides in the mitochondrion. The enzyme catalyses RNA(n) + a ribonucleoside 5'-triphosphate = RNA(n+1) + diphosphate. In terms of biological role, DNA-dependent RNA polymerase catalyzes the transcription of DNA into RNA using the four ribonucleoside triphosphates as substrates. Combines in the mitochondrion with mitochondrial transcription factor mtf1 as a holoenzyme to recognize and initiate transcription at the core mitochondrial promoters. This chain is DNA-directed RNA polymerase, mitochondrial (rpo41), found in Schizosaccharomyces pombe (strain 972 / ATCC 24843) (Fission yeast).